The following is a 372-amino-acid chain: Hydrogenase-2 small chain (372 aa).

The tat-type signal signal peptide spans 1-37; the sequence is MTGDNTLIHSHGINRRDFMKLCAALAATMGLSSKAAA. [4Fe-4S] cluster is bound by residues cysteine 59, cysteine 62, cysteine 157, cysteine 191, histidine 229, cysteine 232, cysteine 257, and cysteine 263. 3 residues coordinate [3Fe-4S] cluster: cysteine 272, cysteine 292, and cysteine 295.

The protein belongs to the [NiFe]/[NiFeSe] hydrogenase small subunit family. As to quaternary structure, heterodimer of a large and a small subunit. Requires [4Fe-4S] cluster as cofactor. The cofactor is [3Fe-4S] cluster. Post-translationally, predicted to be exported by the Tat system. The position of the signal peptide cleavage has not been experimentally proven.

It is found in the cell membrane. It localises to the periplasm. It catalyses the reaction H2 + A = AH2. Its function is as follows. This is one of three E.coli hydrogenases synthesized in response to different physiological conditions. HYD2 is involved in hydrogen uptake. The protein is Hydrogenase-2 small chain (hybO) of Escherichia coli O157:H7.